The sequence spans 330 residues: GMP reductase (330 aa).

Cys-180 (thioimidate intermediate) is an active-site residue. NADP(+) is bound at residue 209-232 (LIADGGIRHNGDIAKSVRFGASMV).

This sequence belongs to the IMPDH/GMPR family. GuaC type 2 subfamily.

The catalysed reaction is IMP + NH4(+) + NADP(+) = GMP + NADPH + 2 H(+). In terms of biological role, catalyzes the irreversible NADPH-dependent deamination of GMP to IMP. It functions in the conversion of nucleobase, nucleoside and nucleotide derivatives of G to A nucleotides, and in maintaining the intracellular balance of A and G nucleotides. The chain is GMP reductase from Lactobacillus johnsonii (strain CNCM I-12250 / La1 / NCC 533).